Here is a 174-residue protein sequence, read N- to C-terminus: Transcriptional repressor NrdR (174 aa).

A zinc finger spans residues 3–34; it reads CPFCQHNDTRVIDSRVSEDGTTIRRRRECEAC. The 91-residue stretch at 49–139 folds into the ATP-cone domain; it reads PTVVKSDGGR…VYRSFQDVAD (91 aa).

It belongs to the NrdR family. Zn(2+) is required as a cofactor.

Its function is as follows. Negatively regulates transcription of bacterial ribonucleotide reductase nrd genes and operons by binding to NrdR-boxes. This is Transcriptional repressor NrdR from Xanthomonas axonopodis pv. citri (strain 306).